The chain runs to 339 residues: GTPase Obg (339 aa).

An Obg domain is found at 1–159; that stretch reads MKFVDEAFVR…RELKLELKLL (159 aa). The interval 127-147 is disordered; that stretch reads NTHFKSSTNRAPRRTTSGEEG. In terms of domain architecture, OBG-type G spans 160–333; sequence ADVGLLGLPN…LCYDLMSFLE (174 aa). GTP contacts are provided by residues 166 to 173, 191 to 195, 213 to 216, 283 to 286, and 314 to 316; these read GLPNAGKS, FTTLY, DIPG, NKID, and SAI. Mg(2+) is bound by residues serine 173 and threonine 193.

The protein belongs to the TRAFAC class OBG-HflX-like GTPase superfamily. OBG GTPase family. As to quaternary structure, monomer. It depends on Mg(2+) as a cofactor.

The protein resides in the cytoplasm. Functionally, an essential GTPase which binds GTP, GDP and possibly (p)ppGpp with moderate affinity, with high nucleotide exchange rates and a fairly low GTP hydrolysis rate. Plays a role in control of the cell cycle, stress response, ribosome biogenesis and in those bacteria that undergo differentiation, in morphogenesis control. The protein is GTPase Obg of Coxiella burnetii (strain CbuK_Q154) (Coxiella burnetii (strain Q154)).